Here is a 398-residue protein sequence, read N- to C-terminus: MGVLSAADPPPVSAIGFEGYEKRLEITFSEAPVFADPDGRGLRALSRAQIDSVLDLARCTIVSELSNKDFDSYVLSESSLFIYSDKIVIKTCGTTKLLLTIPRILELAEGLSMPLAAVKYSRGMFIFPSAQPAPHRSFSEEVAVLNRYFGHLKSGGNAYVIGDPAKPGQKWHIYYATQHPEQPMVTLEMCMTGLDKEKASVFFKTSADGHTSCAKEMTKLSGISDIIPEMEICDFDFEPCGYSMNAIHGSAFSTIHVTPEDGFSYASYEVVGFDASTLAYGDLVKRVLRCFGPSEFSVAVTIFGGHGHAGTWAKELNADAYKCNNMVEQELPCGGLLIYQSFDATEDVPVAVGSPKSVLHCFEAENMVNPAPVKEGKLGNLLPWGEDALEENDGVFDE.

Active-site residues include Glu-18 and Glu-21. Ser-78 (schiff-base intermediate with substrate; via pyruvic acid) is an active-site residue. Ser-78 is modified (pyruvic acid (Ser); by autocatalysis). Cys-92 acts as the Proton donor; for catalytic activity in catalysis. Catalysis depends on proton acceptor; for processing activity residues Ser-243 and His-256.

It belongs to the eukaryotic AdoMetDC family. It depends on pyruvate as a cofactor. In terms of processing, is synthesized initially as an inactive proenzyme. Formation of the active enzyme involves a self-maturation process in which the active site pyruvoyl group is generated from an internal serine residue via an autocatalytic post-translational modification. Two non-identical subunits are generated from the proenzyme in this reaction, and the pyruvate is formed at the N-terminus of the alpha chain, which is derived from the carboxyl end of the proenzyme. The post-translation cleavage follows an unusual pathway, termed non-hydrolytic serinolysis, in which the side chain hydroxyl group of the serine supplies its oxygen atom to form the C-terminus of the beta chain, while the remainder of the serine residue undergoes an oxidative deamination to produce ammonia and the pyruvoyl group blocking the N-terminus of the alpha chain.

It carries out the reaction S-adenosyl-L-methionine + H(+) = S-adenosyl 3-(methylsulfanyl)propylamine + CO2. The protein operates within amine and polyamine biosynthesis; S-adenosylmethioninamine biosynthesis; S-adenosylmethioninamine from S-adenosyl-L-methionine: step 1/1. This Oryza sativa subsp. japonica (Rice) protein is S-adenosylmethionine decarboxylase proenzyme (SAMDC).